A 176-amino-acid polypeptide reads, in one-letter code: Ribosome maturation factor RimM (176 aa).

A PRC barrel domain is found at 92-165; sequence EDEFLYSDLI…RLVVVPPVYA (74 aa).

The protein belongs to the RimM family. As to quaternary structure, binds ribosomal protein uS19.

Its subcellular location is the cytoplasm. Functionally, an accessory protein needed during the final step in the assembly of 30S ribosomal subunit, possibly for assembly of the head region. Essential for efficient processing of 16S rRNA. May be needed both before and after RbfA during the maturation of 16S rRNA. It has affinity for free ribosomal 30S subunits but not for 70S ribosomes. The polypeptide is Ribosome maturation factor RimM (Paramagnetospirillum magneticum (strain ATCC 700264 / AMB-1) (Magnetospirillum magneticum)).